The sequence spans 798 residues: Integrin beta-1 (798 aa).

The signal sequence occupies residues 1 to 20 (MNLQLIFWIGLISSVCYVFG). Residues 21–728 (QADENRCLKA…ETPECPTGPD (708 aa)) are Extracellular-facing. The PSI domain maps to 26–76 (RCLKANAKSCGECIQAGPNCGWCTNSTFLQEGMPTSARCDDLEALRKKGCH). 28 disulfides stabilise this stretch: Cys27–Cys45, Cys35–Cys464, Cys38–Cys64, Cys48–Cys75, Cys207–Cys213, Cys261–Cys301, Cys401–Cys415, Cys435–Cys462, Cys466–Cys486, Cys477–Cys489, Cys491–Cys500, Cys502–Cys533, Cys516–Cys531, Cys525–Cys536, Cys538–Cys553, Cys555–Cys576, Cys560–Cys574, Cys568–Cys579, Cys581–Cys590, Cys592–Cys615, Cys599–Cys613, Cys607–Cys618, Cys620–Cys630, Cys633–Cys636, Cys640–Cys691, Cys646–Cys665, Cys649–Cys661, and Cys699–Cys723. Asn50 carries N-linked (GlcNAc...) asparagine glycosylation. Basic and acidic residues predominate over residues 75 to 84 (CHPDDIENPR). Positions 75 to 107 (CHPDDIENPRGSKNIKKNKNVTNRSKGTAEKLQ) are disordered. N-linked (GlcNAc...) asparagine glycosylation is found at Asn94 and Asn97. One can recognise a VWFA domain in the interval 140-378 (DYPIDLYYLM…QLIIDAYNSL (239 aa)). Mg(2+) is bound by residues Ser152 and Ser154. Residues Ser154, Asp157, Asp158, and Glu189 each contribute to the Ca(2+) site. The CX3CL1-binding stretch occupies residues 207 to 213 (CTSEQNC). An N-linked (GlcNAc...) asparagine glycan is attached at Asn212. Residues Asn244, Asp246, Pro248, and Glu249 each coordinate Ca(2+). Glu249 lines the Mg(2+) pocket. Asn269 is a glycosylation site (N-linked (GlcNAc...) asparagine). The CX3CL1-binding stretch occupies residues 295 to 314 (LPNDGHCHLENDVYTMSHYY). Ala362 is a Ca(2+) binding site. 3 N-linked (GlcNAc...) asparagine glycosylation sites follow: Asn363, Asn406, and Asn417. An interaction with TMEM182 region spans residues 383-465 (ILENSKLPEG…IILQFICECE (83 aa)). I-EGF domains are found at residues 466–501 (CQSEGIPSSPKCHDGNGTFECGACRCNEGRVGRHCE), 502–554 (CSTD…KFCE), 555–591 (CDNFNCDRSNGLICGGNGVCKCRVCECNPNYTGSACD), and 592–631 (CSLDTTSCMAVNGQICNGRGVCECGVCKCTDPKFQGPTCE). A glycan (N-linked (GlcNAc...) asparagine) is linked at Asn481. Asn520 carries N-linked (GlcNAc...) asparagine glycosylation. N-linked (GlcNAc...) asparagine glycosylation occurs at Asn584. Asn669 carries N-linked (GlcNAc...) asparagine glycosylation. Residues 729–749 (IIPIVAGVVAGIVLIGLALLL) form a helical membrane-spanning segment. Residues 750–798 (IWKLLMIIHDRREFAKFEKEKMNAKWDTGENPIYKSAVTTVVNPKYEGK) are Cytoplasmic-facing. The tract at residues 762–767 (EFAKFE) is signal for sorting from recycling endosomes; interaction with ACAP1. Position 777 is a phosphothreonine (Thr777). At Tyr783 the chain carries Phosphotyrosine. Ser785 bears the Phosphoserine mark. The interval 785–792 (SAVTTVVN) is interaction with ITGB1BP1. Thr789 bears the Phosphothreonine mark. N6-acetyllysine; alternate is present on Lys794. A Glycyl lysine isopeptide (Lys-Gly) (interchain with G-Cter in SUMO1); alternate cross-link involves residue Lys794.

The protein belongs to the integrin beta chain family. Interacts with seprase FAP (seprase); the interaction occurs at the cell surface of invadopodia membrane in a collagen-dependent manner. Heterodimer of an alpha and a beta subunit. Beta-1 associates with either alpha-1, alpha-2, alpha-3, alpha-4, alpha-5, alpha-6, alpha-7, alpha-8, alpha-9, alpha-10, alpha-11 or alpha-V. ITGA6:ITGB1 is found in a complex with CD9; interaction takes place in oocytes and is involved in sperm-egg fusion. Binds LGALS3BP and NMRK2, when associated with alpha-7, but not with alpha-5. Interacts with FLNA, FLNB, FLNC and RANBP9. Interacts with KRT1 in the presence of RACK1 and SRC. Interacts with JAML; integrin alpha-4/beta-1 may regulate leukocyte to endothelial cells adhesion by controlling JAML homodimerization. Interacts with RAB21. Interacts (via the cytoplasmic region) with RAB25 (via the hypervariable C-terminal region). Interacts with MYO10. Interacts with ITGB1BP1 (via C-terminal region); the interaction is a prerequisite for focal adhesion disassembly. Interacts with TLN1; the interaction is prevented by competitive binding of ITGB1BP1. Interacts with ACAP1; required for ITGB1 recycling. Interacts with ASAP3. Interacts with FERMT2; the interaction is inhibited in presence of ITGB1BP1. Interacts with DAB2. Interacts with FGR and HCK. Interacts with alpha-7A and alpha-7B in adult skeletal muscle. Interacts with alpha-7B in cardiomyocytes of adult heart. Interacts with EMP2; the interaction may be direct or indirect and ITGB1 has a heterodimer form. ITGA5:ITGB1 interacts with CCN3. ITGA4:ITGB1 is found in a ternary complex with CX3CR1 and CX3CL1. ITGA5:ITGB1 interacts with FBN1. ITGA5:ITGB1 interacts with IL1B. Interacts with MDK. ITGA4:ITGB1 interacts with MDK; this interaction mediates MDK-induced osteoblast cells migration through PXN phosphorylation. ITGA6:ITGB1 interacts with MDK; this interaction mediates MDK-induced neurite-outgrowth. ITGA5:ITGB1 interacts with ACE2. Interacts with TMEM182 and LAMB1. Interacts with tensin TNS3; TNS3 also interacts with PEAK1, thus acting as an adapter molecule to bridge the association of PEAK1 with ITGB1. Interacts with tensin TNS4; the interaction displaces tensin TNS3 from the ITGB1 cytoplasmic tail and promotes ITGB1 stability. Integrin ITGA9:ITGB1 interacts with SPP1/OPN (via N-terminus). Integrin ITGA9:ITGB1 interacts with TNC/TNFN3 (via the 3rd Fibronectin type-III domain). Integrins ITGA4:ITGB1 and ITGA9:ITGB1 interact with SVEP1 (via Sushi domain 21); thereby inhibit Ca(2+) intracellular signaling and as a result repress vasocontraction. ITGA4:ITGB1 and ITGA5:ITGB1 interacts with SELP. Interacts with CD248. ITGA5:ITGB1 interacts with IGFBP1. ITGA4:ITGB1 interacts with BCAM. Interacts with ADGRG6. Expressed in the spleen, thymus, alveolar macrophages, bone marrow, liver and kidney.

The protein localises to the cell membrane. It localises to the cell projection. Its subcellular location is the invadopodium membrane. The protein resides in the ruffle membrane. It is found in the recycling endosome. The protein localises to the melanosome. It localises to the lamellipodium. Its subcellular location is the ruffle. The protein resides in the cell junction. It is found in the focal adhesion. Functionally, integrins alpha-1/beta-1, alpha-2/beta-1, alpha-10/beta-1 and alpha-11/beta-1 are receptors for collagen. Integrins alpha-1/beta-1 and alpha-2/beta-2 recognize the proline-hydroxylated sequence G-F-P-G-E-R in collagen. Integrins alpha-2/beta-1, alpha-3/beta-1, alpha-4/beta-1, alpha-5/beta-1, alpha-8/beta-1, alpha-10/beta-1, alpha-11/beta-1 and alpha-V/beta-1 are receptors for fibronectin. Alpha-4/beta-1 recognizes one or more domains within the alternatively spliced CS-1 and CS-5 regions of fibronectin. Integrin alpha-5/beta-1 is a receptor for fibrinogen. Integrin alpha-1/beta-1, alpha-2/beta-1, alpha-6/beta-1 and alpha-7/beta-1 are receptors for lamimin. Integrin alpha-6/beta-1 (ITGA6:ITGB1) is present in oocytes and is involved in sperm-egg fusion. Integrin alpha-4/beta-1 is a receptor for VCAM1 and recognizes the sequence Q-I-D-S in VCAM1. Integrin alpha-9/beta-1 is a receptor for VCAM1, cytotactin and osteopontin. It recognizes the sequence A-E-I-D-G-I-E-L in cytotactin. Integrin alpha-3/beta-1 is a receptor for epiligrin, thrombospondin and CSPG4. Integrin alpha-3/beta-1 provides a docking site for FAP (seprase) at invadopodia plasma membranes in a collagen-dependent manner and hence may participate in the adhesion, formation of invadopodia and matrix degradation processes, promoting cell invasion. Alpha-3/beta-1 may mediate with LGALS3 the stimulation by CSPG4 of endothelial cells migration. Integrin alpha-V/beta-1 is a receptor for vitronectin. Beta-1 integrins recognize the sequence R-G-D in a wide array of ligands. When associated with alpha-7/beta-1 integrin, regulates cell adhesion and laminin matrix deposition. Involved in promoting endothelial cell motility and angiogenesis. Involved in osteoblast compaction through the fibronectin fibrillogenesis cell-mediated matrix assembly process and the formation of mineralized bone nodules. May be involved in up-regulation of the activity of kinases such as PKC via binding to KRT1. Together with KRT1 and RACK1, serves as a platform for SRC activation or inactivation. Plays a mechanistic adhesive role during telophase, required for the successful completion of cytokinesis. ITGA4:ITGB1 binds to fractalkine (CX3CL1) and may act as its coreceptor in CX3CR1-dependent fractalkine signaling. ITGA4:ITGB1 and ITGA5:ITGB1 bind to PLA2G2A via a site (site 2) which is distinct from the classical ligand-binding site (site 1) and this induces integrin conformational changes and enhanced ligand binding to site 1. ITGA5:ITGB1 acts as a receptor for fibrillin-1 (FBN1) and mediates R-G-D-dependent cell adhesion to FBN1. ITGA5:ITGB1 acts as a receptor for fibronectin FN1 and mediates R-G-D-dependent cell adhesion to FN1. ITGA5:ITGB1 is a receptor for IL1B and binding is essential for IL1B signaling. ITGA5:ITGB3 is a receptor for soluble CD40LG and is required for CD40/CD40LG signaling. Plays an important role in myoblast differentiation and fusion during skeletal myogenesis. ITGA9:ITGB1 may play a crucial role in SVEP1/polydom-mediated myoblast cell adhesion. Integrins ITGA9:ITGB1 and ITGA4:ITGB1 repress PRKCA-mediated L-type voltage-gated channel Ca(2+) influx and ROCK-mediated calcium sensitivity in vascular smooth muscle cells via their interaction with SVEP1, thereby inhibit vasocontraction. The chain is Integrin beta-1 (ITGB1) from Sus scrofa (Pig).